Here is a 291-residue protein sequence, read N- to C-terminus: Protein US2 (291 aa).

Glycine 2 bears the N-acetylglycine; by host mark. A disordered region spans residues 223–281; that stretch reads NKPRPASSRPHPATHPTQRPCFTCMGRPEIPDEPSWQTGDDDPQNPGPPLAVGDEWPPS.

Belongs to the herpesviridae HHV-1 US2 protein family. Interacts with host KRT18. Interacts with host MAP3K7; this interaction induces host NF-kappa-B pathway.

The protein resides in the virion. It is found in the host cytoplasm. It localises to the host cell surface. Its subcellular location is the host nucleus. Its function is as follows. Plays a role in the activation of the host NF-kappa-B pathway by interacting with and thus activating the component MAP3K7. The chain is Protein US2 from Human herpesvirus 2 (strain HG52) (HHV-2).